The following is a 400-amino-acid chain: MRSVADRVKRIGLSETYAILDKVKKMKAEGHVVYDLGGGEPDFSTPEHIINFTVSAMKNGMTHYTASKGSPGLLKAIANRLFEENHISACWDKNIIVTPSAKHALFITLMTLLNPGDEIVIPSPCWVSYIAMAEMAGAKAVDLPLTRENKYQITRKALAACITDKTRVLLLNNPNNPTGHILTEEEIQVICQVALEHDLFVVMDEIYEHIRYITAPHRSIAAEPGMFERTITVSGFSKAWAMTGWRLGYLCAPEYVLNEILKVQQHSVGCAGAFIQQGGLAALIGDRQPMEDMVKAYRKRRDYMVDSLNRIPGIECYVPEGGLYVYADIRGLGMGDAQTFTLWLLAHAHVAVTPGTAFGKEETMMIRLSFAGAMETIVAAMDSIAEAITEYDASLQQEAS.

3 residues coordinate L-aspartate: G37, W126, and N176. K238 bears the N6-(pyridoxal phosphate)lysine mark. R367 is a binding site for L-aspartate.

The protein belongs to the class-I pyridoxal-phosphate-dependent aminotransferase family. Homodimer. It depends on pyridoxal 5'-phosphate as a cofactor.

Its subcellular location is the cytoplasm. It catalyses the reaction L-aspartate + 2-oxoglutarate = oxaloacetate + L-glutamate. Functionally, catalyzes the reversible conversion of aspartate and 2-oxoglutarate to glutamate and oxaloacetate. Has very weak prephenate aminotransferase activity. The chain is Aspartate aminotransferase from Musicola paradisiaca (strain Ech703) (Dickeya paradisiaca).